We begin with the raw amino-acid sequence, 792 residues long: Vicilin Car i 2.0101 (792 aa).

The first 26 residues, 1–26 (MVTKAKIPLFLFLSALFLALVCSSLA), serve as a signal peptide directing secretion. 5 disordered regions span residues 132–153 (ERRE…DPRE), 182–217 (RFEE…YRQC), 240–272 (ERLE…EQRY), 302–325 (EERE…CQRR), and 350–394 (QQGR…ESGE). 2 stretches are compositionally biased toward basic and acidic residues: residues 182–200 (RFEE…RGRD) and 207–217 (PRDPREQYRQC). Over residues 302 to 314 (EERERQRGRDRQD) the composition is skewed to basic and acidic residues. Low complexity predominate over residues 315-325 (PQQQYHRCQRR). A compositionally biased stretch (basic and acidic residues) spans 350–375 (QQGREWGPDQASPRRESRGREEEQQR). A Cu cation-binding site is contributed by Tyr-379. Cupin type-1 domains are found at residues 384–537 (QGLR…DRLE) and 582–754 (ISLK…EEIE). The Cu cation site is built by Cys-652, His-654, and His-698. Residues 727-754 (LAGQNNIINQLEREAKELSFNMPREEIE) adopt a coiled-coil conformation.

This sequence belongs to the 7S seed storage protein family. Homotrimer. In terms of tissue distribution, expressed in seed (at protein level). Expressed in seed.

Functionally, seed storage protein. This chain is Vicilin Car i 2.0101, found in Carya illinoinensis (Pecan).